Consider the following 612-residue polypeptide: Large ribosomal subunit assembly factor BipA (612 aa).

The 196-residue stretch at Asn-5–Val-200 folds into the tr-type G domain. GTP is bound by residues Asp-17–Thr-22 and Asn-130–Asp-133.

Belongs to the TRAFAC class translation factor GTPase superfamily. Classic translation factor GTPase family. BipA subfamily. As to quaternary structure, monomer.

It localises to the cytoplasm. The enzyme catalyses GTP + H2O = GDP + phosphate + H(+). A 50S ribosomal subunit assembly protein with GTPase activity, required for 50S subunit assembly at low temperatures, may also play a role in translation. Binds GTP and analogs. Binds the 70S ribosome between the 30S and 50S subunits, in a similar position as ribosome-bound EF-G; it contacts a number of ribosomal proteins, both rRNAs and the A-site tRNA. The polypeptide is Large ribosomal subunit assembly factor BipA (Bacillus subtilis (strain 168)).